Reading from the N-terminus, the 563-residue chain is Putative cysteine ligase BshC (563 aa).

Positions 474-506 (LEQSLMGTSKQAEKALDTLRQKTQRANRRKHDE) form a coiled coil.

The protein belongs to the BshC family.

This is Putative cysteine ligase BshC from Prosthecochloris aestuarii (strain DSM 271 / SK 413).